Consider the following 137-residue polypeptide: Putative pre-16S rRNA nuclease (137 aa).

This sequence belongs to the YqgF nuclease family.

It is found in the cytoplasm. Functionally, could be a nuclease involved in processing of the 5'-end of pre-16S rRNA. The polypeptide is Putative pre-16S rRNA nuclease (Bacillus mycoides (strain KBAB4) (Bacillus weihenstephanensis)).